The sequence spans 669 residues: UvrABC system protein B (669 aa).

Residues 26–414 (EGLEDGLAHQ…SGDVVEQVVR (389 aa)) enclose the Helicase ATP-binding domain. 39-46 (GVTGSGKT) is a binding site for ATP. Positions 92-115 (YYDYYQPEAYVPSSDTFIEKDASV) match the Beta-hairpin motif. Residues 431–597 (QVDDLLSEIR…GLNKKINDIL (167 aa)) form the Helicase C-terminal domain. Residues 629–664 (ESKIRELEAKMYQHAQDLEFEQAASVRDQVQALREQ) enclose the UVR domain.

The protein belongs to the UvrB family. Forms a heterotetramer with UvrA during the search for lesions. Interacts with UvrC in an incision complex.

It localises to the cytoplasm. In terms of biological role, the UvrABC repair system catalyzes the recognition and processing of DNA lesions. A damage recognition complex composed of 2 UvrA and 2 UvrB subunits scans DNA for abnormalities. Upon binding of the UvrA(2)B(2) complex to a putative damaged site, the DNA wraps around one UvrB monomer. DNA wrap is dependent on ATP binding by UvrB and probably causes local melting of the DNA helix, facilitating insertion of UvrB beta-hairpin between the DNA strands. Then UvrB probes one DNA strand for the presence of a lesion. If a lesion is found the UvrA subunits dissociate and the UvrB-DNA preincision complex is formed. This complex is subsequently bound by UvrC and the second UvrB is released. If no lesion is found, the DNA wraps around the other UvrB subunit that will check the other stand for damage. The polypeptide is UvrABC system protein B (Photorhabdus laumondii subsp. laumondii (strain DSM 15139 / CIP 105565 / TT01) (Photorhabdus luminescens subsp. laumondii)).